The sequence spans 201 residues: 3-isopropylmalate dehydratase small subunit (201 aa).

The protein belongs to the LeuD family. LeuD type 1 subfamily. As to quaternary structure, heterodimer of LeuC and LeuD.

The enzyme catalyses (2R,3S)-3-isopropylmalate = (2S)-2-isopropylmalate. Its pathway is amino-acid biosynthesis; L-leucine biosynthesis; L-leucine from 3-methyl-2-oxobutanoate: step 2/4. Catalyzes the isomerization between 2-isopropylmalate and 3-isopropylmalate, via the formation of 2-isopropylmaleate. The sequence is that of 3-isopropylmalate dehydratase small subunit from Escherichia coli O9:H4 (strain HS).